A 72-amino-acid polypeptide reads, in one-letter code: Movement protein TGBp3 (72 aa).

Residues 1-2 (MS) lie on the Lumenal side of the membrane. Residues 3-23 (LSFSLIVFAVGVAVSIGVLTL) traverse the membrane as a helical segment. Topologically, residues 24–72 (TTQQSSSYCLILVDGAKAVVEGCHLRQDIPAILSELKPASSPFNPLFCS) are cytoplasmic.

It belongs to the Tymovirales TGBp3 protein family.

Its subcellular location is the host endoplasmic reticulum membrane. Its function is as follows. Plays a role in viral cell-to-cell propagation, by facilitating genome transport to neighboring plant cells through plasmosdesmata. May induce the formation of granular vesicles derived from the Endoplasmic reticulum, which align on actin filaments. This Lolium latent virus (isolate Lolium/USA/US1/-) (LoLV) protein is Movement protein TGBp3 (ORF4).